We begin with the raw amino-acid sequence, 165 residues long: RxLR effector protein CRE12 (165 aa).

The signal sequence occupies residues 1 to 23 (MRLAAFVLVAVAFAIIPDGRVSA). The RxLR-dEER motif lies at 40 to 59 (RLLRLNAVPQPVETGNQEER).

It belongs to the RxLR effector family.

Its subcellular location is the secreted. It is found in the host cell. In terms of biological role, effector that is involved in host plant infection. Contributes to virulence during the early infection stage, by inhibiting plant defense responses induced by both PAMP-triggered immunity (PTI) and effector-triggered immunity (ETI). The polypeptide is RxLR effector protein CRE12 (Phytophthora infestans (strain T30-4) (Potato late blight agent)).